Here is a 217-residue protein sequence, read N- to C-terminus: Oxygen-insensitive NAD(P)H nitroreductase (217 aa).

10–14 (RYSTK) contacts FMN. NAD(+) contacts are provided by Lys-14, Thr-41, Asn-71, Lys-74, and Arg-107. An FMN-binding site is contributed by Asn-71. Residues 165-166 (EG) and 205-207 (KSR) each bind FMN.

The protein belongs to the nitroreductase family. In terms of assembly, homodimer. The cofactor is FMN.

In terms of biological role, reduction of a variety of nitroaromatic compounds using NADH (and to lesser extent NADPH) as source of reducing equivalents; two electrons are transferred. Capable of reducing nitrofurazone. The chain is Oxygen-insensitive NAD(P)H nitroreductase from Salmonella typhimurium (strain LT2 / SGSC1412 / ATCC 700720).